The primary structure comprises 317 residues: Methionyl-tRNA formyltransferase (317 aa).

Residue 112–115 (SLLP) coordinates (6S)-5,6,7,8-tetrahydrofolate.

The protein belongs to the Fmt family.

It catalyses the reaction L-methionyl-tRNA(fMet) + (6R)-10-formyltetrahydrofolate = N-formyl-L-methionyl-tRNA(fMet) + (6S)-5,6,7,8-tetrahydrofolate + H(+). Attaches a formyl group to the free amino group of methionyl-tRNA(fMet). The formyl group appears to play a dual role in the initiator identity of N-formylmethionyl-tRNA by promoting its recognition by IF2 and preventing the misappropriation of this tRNA by the elongation apparatus. The polypeptide is Methionyl-tRNA formyltransferase (Histophilus somni (strain 2336) (Haemophilus somnus)).